The primary structure comprises 129 residues: Defensin-like protein 182 (129 aa).

An N-terminal signal peptide occupies residues 1-26; the sequence is METVTSLVFIVNLLIIFTSVVNQARG. Cystine bridges form between Cys-29–Cys-70, Cys-36–Cys-55, Cys-39–Cys-64, Cys-43–Cys-66, Cys-83–Cys-129, Cys-94–Cys-114, Cys-99–Cys-123, and Cys-103–Cys-125.

This sequence belongs to the DEFL family.

It localises to the secreted. Functionally, confers broad-spectrum resistance to pathogens. In Arabidopsis thaliana (Mouse-ear cress), this protein is Defensin-like protein 182 (PDF3.2).